The following is a 694-amino-acid chain: Elongation factor G (694 aa).

The 276-residue stretch at 10-285 folds into the tr-type G domain; sequence EKTRNIGIMA…GVVDYLPSPL (276 aa). GTP is bound by residues 19–26, 83–87, and 137–140; these read AHIDAGKT, DTPGH, and NKMD.

It belongs to the TRAFAC class translation factor GTPase superfamily. Classic translation factor GTPase family. EF-G/EF-2 subfamily.

The protein localises to the cytoplasm. Its function is as follows. Catalyzes the GTP-dependent ribosomal translocation step during translation elongation. During this step, the ribosome changes from the pre-translocational (PRE) to the post-translocational (POST) state as the newly formed A-site-bound peptidyl-tRNA and P-site-bound deacylated tRNA move to the P and E sites, respectively. Catalyzes the coordinated movement of the two tRNA molecules, the mRNA and conformational changes in the ribosome. The sequence is that of Elongation factor G from Lactobacillus delbrueckii subsp. bulgaricus (strain ATCC 11842 / DSM 20081 / BCRC 10696 / JCM 1002 / NBRC 13953 / NCIMB 11778 / NCTC 12712 / WDCM 00102 / Lb 14).